The primary structure comprises 232 residues: Uracil-DNA glycosylase (232 aa).

Asp70 (proton acceptor) is an active-site residue.

This sequence belongs to the uracil-DNA glycosylase (UDG) superfamily. UNG family.

The protein localises to the cytoplasm. It catalyses the reaction Hydrolyzes single-stranded DNA or mismatched double-stranded DNA and polynucleotides, releasing free uracil.. Functionally, excises uracil residues from the DNA which can arise as a result of misincorporation of dUMP residues by DNA polymerase or due to deamination of cytosine. This Campylobacter fetus subsp. fetus (strain 82-40) protein is Uracil-DNA glycosylase.